The sequence spans 453 residues: Phosphoglucosamine mutase (453 aa).

Ser108 (phosphoserine intermediate) is an active-site residue. Ser108, Asp247, Asp249, and Asp251 together coordinate Mg(2+). A Phosphoserine modification is found at Ser108.

It belongs to the phosphohexose mutase family. Mg(2+) is required as a cofactor. Activated by phosphorylation.

The enzyme catalyses alpha-D-glucosamine 1-phosphate = D-glucosamine 6-phosphate. In terms of biological role, catalyzes the conversion of glucosamine-6-phosphate to glucosamine-1-phosphate. The chain is Phosphoglucosamine mutase from Methylobacillus flagellatus (strain ATCC 51484 / DSM 6875 / VKM B-1610 / KT).